We begin with the raw amino-acid sequence, 622 residues long: Chaperone protein HscA homolog (622 aa).

Belongs to the heat shock protein 70 family.

Functionally, chaperone involved in the maturation of iron-sulfur cluster-containing proteins. Has a low intrinsic ATPase activity which is markedly stimulated by HscB. This is Chaperone protein HscA homolog from Burkholderia pseudomallei (strain 668).